We begin with the raw amino-acid sequence, 218 residues long: Glycerol-3-phosphate acyltransferase 2 (218 aa).

Transmembrane regions (helical) follow at residues 6–26 (YLLI…VLVG), 50–70 (VMGP…GTLA), 85–105 (LLLI…FLKF), 115–135 (AGVF…VFLP), and 159–179 (FWFH…LLFV).

It belongs to the PlsY family. Probably interacts with PlsX.

It is found in the cell membrane. It catalyses the reaction an acyl phosphate + sn-glycerol 3-phosphate = a 1-acyl-sn-glycero-3-phosphate + phosphate. It participates in lipid metabolism; phospholipid metabolism. Catalyzes the transfer of an acyl group from acyl-phosphate (acyl-PO(4)) to glycerol-3-phosphate (G3P) to form lysophosphatidic acid (LPA). This enzyme utilizes acyl-phosphate as fatty acyl donor, but not acyl-CoA or acyl-ACP. This is Glycerol-3-phosphate acyltransferase 2 from Lactobacillus johnsonii (strain CNCM I-12250 / La1 / NCC 533).